Reading from the N-terminus, the 393-residue chain is BEN domain-containing protein 5 (393 aa).

Positions 169 to 212 (RVLYEELLRSYQQQQQEMKHIQHELERTRKQLVQQAKKLKDYGS) form a coiled coil. The 107-residue stretch at 274–380 (GSGVWVNEEK…EKIMDINKSC (107 aa)) folds into the BEN domain.

In terms of biological role, may act as a transcriptional repressor. This is BEN domain-containing protein 5 (bend5) from Xenopus laevis (African clawed frog).